The following is a 305-amino-acid chain: Coiled-coil domain-containing protein 69-A (305 aa).

Glycine 2 carries the N-myristoyl glycine lipid modification. The segment at 13-38 (LRKKKRQKAHQGGLTSQELNDLNAKT) is disordered. Residues 25 to 38 (GLTSQELNDLNAKT) show a composition bias toward polar residues. Positions 42–281 (NEVLQKIKEY…QREKEQNLYR (240 aa)) form a coiled coil.

The protein belongs to the CCDC69 family.

The protein localises to the cytoplasm. It localises to the cytoskeleton. Its subcellular location is the spindle. The protein resides in the midbody. Functionally, may act as a scaffold to regulate the recruitment and assembly of spindle midzone components. The polypeptide is Coiled-coil domain-containing protein 69-A (ccdc69-a) (Xenopus laevis (African clawed frog)).